We begin with the raw amino-acid sequence, 241 residues long: Adenylate kinase 3 (241 aa).

38–43 serves as a coordination point for ATP; the sequence is GCGKGT. Residues 58-87 are NMP; sequence ATGDMLRAAVAAKTPLGIKAKEAMDKGELV. AMP contacts are provided by residues threonine 59, arginine 64, 85 to 87, 113 to 116, and glutamine 120; these read ELV and GFPR. Residues 154–191 form an LID region; the sequence is GRWIHPSSGRSYHTKFAPPKTPGLDDVTGEPLIQRKDD. Residue arginine 155 participates in ATP binding. Residues arginine 188 and arginine 199 each contribute to the AMP site.

It belongs to the adenylate kinase family.

It is found in the cytoplasm. It carries out the reaction AMP + ATP = 2 ADP. In terms of biological role, catalyzes the reversible transfer of the terminal phosphate group between ATP and AMP. Plays an important role in cellular energy homeostasis and in adenine nucleotide metabolism. This is Adenylate kinase 3 (ADK-A) from Oryza sativa subsp. japonica (Rice).